Reading from the N-terminus, the 329-residue chain is L-arabinose-binding periplasmic protein (329 aa).

The N-terminal stretch at 1 to 23 (MHKFTKALAAIGLAAVMSQSAMA) is a signal peptide.

Belongs to the bacterial solute-binding protein 2 family.

It localises to the periplasm. Its function is as follows. Involved in the high-affinity L-arabinose membrane transport system. Binds with high affinity to arabinose, but can also bind D-galactose (approximately 2-fold reduction) and D-fucose (approximately 40-fold reduction). The chain is L-arabinose-binding periplasmic protein (araF) from Escherichia coli (strain K12).